A 358-amino-acid polypeptide reads, in one-letter code: Chorismate synthase (358 aa).

Residue arginine 46 participates in NADP(+) binding. Residues 123–125 (RSS), 235–236 (NA), glycine 275, 290–294 (KATPS), and arginine 316 each bind FMN.

It belongs to the chorismate synthase family. As to quaternary structure, homotetramer. It depends on FMNH2 as a cofactor.

The enzyme catalyses 5-O-(1-carboxyvinyl)-3-phosphoshikimate = chorismate + phosphate. It functions in the pathway metabolic intermediate biosynthesis; chorismate biosynthesis; chorismate from D-erythrose 4-phosphate and phosphoenolpyruvate: step 7/7. In terms of biological role, catalyzes the anti-1,4-elimination of the C-3 phosphate and the C-6 proR hydrogen from 5-enolpyruvylshikimate-3-phosphate (EPSP) to yield chorismate, which is the branch point compound that serves as the starting substrate for the three terminal pathways of aromatic amino acid biosynthesis. This reaction introduces a second double bond into the aromatic ring system. This is Chorismate synthase from Aliarcobacter butzleri (strain RM4018) (Arcobacter butzleri).